A 2130-amino-acid polypeptide reads, in one-letter code: Dedicator of cytokinesis protein 7 (2130 aa).

S30 bears the Phosphoserine mark. Residues 137 to 175 form a disordered region; it reads GFNPNTLDKQKERQKGLPRQVFESDEAPDGSSYQDEQDD. Residues S180 and S182 each carry the phosphoserine modification. Positions 365–395 form a coiled coil; it reads FKEADATKNKEKLEKLKSQADQFCQRLGKYR. K381 carries the N6-methyllysine modification. T450 carries the post-translational modification Phosphothreonine. Residue S452 is modified to Phosphoserine. Residues 561-727 form the C2 DOCK-type domain; that stretch reads RNLLYIYPQS…GVFNVEVVAV (167 aa). S862, S864, S882, S888, S896, S900, and S905 each carry phosphoserine. A compositionally biased stretch (low complexity) spans 888-901; sequence SLNLNRSRSLSNSN. The tract at residues 888-966 is disordered; sequence SLNLNRSRSL…SCNRMSSHTE (79 aa). Phosphothreonine is present on residues T907 and T909. A phosphoserine mark is found at S910, S929, S963, S1382, S1420, S1422, S1424, and S1428. Residues 942-966 show a composition bias toward polar residues; the sequence is SNPSPSAESTQAMDRSCNRMSSHTE. One can recognise a DOCKER domain in the interval 1668-2104; sequence KGYQTSPDLR…LQPLINRKIP (437 aa). K1952 bears the N6-acetyllysine mark. Residues 2076-2102 adopt a coiled-coil conformation; sequence DQKEYQRELERNYHRLKEALQPLINRK. Phosphoserine is present on S2119.

This sequence belongs to the DOCK family. In terms of assembly, component of the DOCK7-induced septin displacement/DISP complex, at least composed of DOCK7, LRCH3 and MYO6. Interacts with TSC1. Interacts with nucleotide-free RAC1 and RAC3. Interacts with TACC3. Interacts with CRY1. Interacts with NOD2.

The protein localises to the cell projection. The protein resides in the axon. In terms of biological role, functions as a guanine nucleotide exchange factor (GEF), which activates Rac1 and Rac3 Rho small GTPases by exchanging bound GDP for free GTP. Does not have a GEF activity for CDC42. Required for STMN1 'Ser-15' phosphorylation during axon formation and consequently for neuronal polarization. As part of the DISP complex, may regulate the association of septins with actin and thereby regulate the actin cytoskeleton. Has a role in pigmentation. Involved in the regulation of cortical neurogenesis through the control of radial glial cells (RGCs) proliferation versus differentiation; negatively regulates the basal-to-apical interkinetic nuclear migration of RGCs by antagonizing the microtubule growth-promoting function of TACC3. The polypeptide is Dedicator of cytokinesis protein 7 (Dock7) (Mus musculus (Mouse)).